Consider the following 475-residue polypeptide: Ribosomal protein uS12 methylthiotransferase RimO (475 aa).

Positions 36 to 150 constitute an MTTase N-terminal domain; it reads NKINFISLGC…ILKAVQSTQK (115 aa). [4Fe-4S] cluster contacts are provided by Cys45, Cys81, Cys113, Cys185, Cys189, and Cys192. One can recognise a Radical SAM core domain in the interval 171-403; it reads STPKHYAYLK…MQVQKKVVKK (233 aa). The 70-residue stretch at 406 to 475 folds into the TRAM domain; sequence KKMIGKKIAV…ADYDLVGHVI (70 aa).

Belongs to the methylthiotransferase family. RimO subfamily. [4Fe-4S] cluster serves as cofactor.

Its subcellular location is the cytoplasm. It catalyses the reaction L-aspartate(89)-[ribosomal protein uS12]-hydrogen + (sulfur carrier)-SH + AH2 + 2 S-adenosyl-L-methionine = 3-methylsulfanyl-L-aspartate(89)-[ribosomal protein uS12]-hydrogen + (sulfur carrier)-H + 5'-deoxyadenosine + L-methionine + A + S-adenosyl-L-homocysteine + 2 H(+). Functionally, catalyzes the methylthiolation of an aspartic acid residue of ribosomal protein uS12. The sequence is that of Ribosomal protein uS12 methylthiotransferase RimO from Protochlamydia amoebophila (strain UWE25).